A 3106-amino-acid chain; its full sequence is Cilia- and flagella-associated protein 54 (3106 aa).

3 stretches are compositionally biased toward low complexity: residues 1–24 (MASSRSSSSSSEESPDSETSVSPV), 34–48 (STAVLKSPSESKSSS), and 2356–2368 (ESCSPTSPETSTT). Disordered stretches follow at residues 1 to 58 (MASS…THSE) and 2354 to 2374 (PEESCSPTSPETSTTESKDDS).

It belongs to the CFAP54 family. As to expression, expressed at high level in the testis and at a low level in the lung and brain.

Its subcellular location is the cytoplasm. It localises to the cytoskeleton. It is found in the cilium axoneme. Functionally, required for assembly and function of cilia and flagella. The protein is Cilia- and flagella-associated protein 54 of Mus musculus (Mouse).